The following is a 371-amino-acid chain: MSSFSYAEAGVIGALQGATELFPVSSLGHSVLVPALIGGRWAADLDVSAPESPYLAFIVAVHVATAAALIVAFRDDWRRIITGLAVSVRDRRVTTADGRLAWLIILGTVPVGIVGLLLEHPLRTHLGRPLPAAVFLTVNGMIMLLGERLRRRSTTRGAPGPAGYRDEHTMPIPRSAPVTGRRVGTRPASGPLVAHGSAPGSGPGNHSKAVTTETALPEAEDVTLPEAETALPEAETAARHADRRLAALPRLDALLVGVAQTAALAPGISRSGVTMIAGLSRGLSHLDAARFAFLLATPVILAAGLLKLPDLLGPLGDGVRGQTLFGAIVAGVVAYVSIRFLARWFETRTATPFAVYCLVAGALCVVRFGIF.

The next 3 helical transmembrane spans lie at 53 to 73, 100 to 120, and 126 to 146; these read PYLA…IVAF, LAWL…LLEH, and LGRP…MLLG. Residues 152–226 are disordered; it reads RSTTRGAPGP…PEAEDVTLPE (75 aa). Transmembrane regions (helical) follow at residues 291-311, 322-342, and 351-371; these read FAFL…LPDL, QTLF…RFLA, and TPFA…FGIF.

The protein belongs to the UppP family.

It is found in the cell membrane. The catalysed reaction is di-trans,octa-cis-undecaprenyl diphosphate + H2O = di-trans,octa-cis-undecaprenyl phosphate + phosphate + H(+). Catalyzes the dephosphorylation of undecaprenyl diphosphate (UPP). Confers resistance to bacitracin. This chain is Undecaprenyl-diphosphatase 1, found in Frankia casuarinae (strain DSM 45818 / CECT 9043 / HFP020203 / CcI3).